The primary structure comprises 460 residues: A-type ATP synthase subunit B (460 aa).

Belongs to the ATPase alpha/beta chains family. Has multiple subunits with at least A(3), B(3), C, D, E, F, H, I and proteolipid K(x).

It localises to the cell membrane. In terms of biological role, component of the A-type ATP synthase that produces ATP from ADP in the presence of a proton gradient across the membrane. The B chain is a regulatory subunit. The polypeptide is A-type ATP synthase subunit B (Thermofilum pendens (strain DSM 2475 / Hrk 5)).